A 700-amino-acid chain; its full sequence is Lutropin-choriogonadotropic hormone receptor (700 aa).

Residues 1–26 form the signal peptide; it reads MGRRVPALRQLLVLAMLVLKQSQLHS. Over 27-362 the chain is Extracellular; the sequence is PELSGSRCPE…AFNPCEDIMG (336 aa). One copy of the LRR 1 repeat lies at 52-75; it reads RAGLARLSLTYLPVKVIPSQAFRG. N-linked (GlcNAc...) asparagine glycosylation is present at Asn103. LRR repeat units follow at residues 126 to 150, 176 to 200, and 225 to 248; these read LPRLKYLSICNTGIRTLPDVSKISS, MNNESITLKLYGNGFEEVQSHAFNG, and ATGPSILDVSSTKLQALPSHGLES. Asn178 and Asn199 each carry an N-linked (GlcNAc...) asparagine glycan. Asn295, Asn303, and Asn317 each carry an N-linked (GlcNAc...) asparagine glycan. Tyr335 carries the post-translational modification Sulfotyrosine. Residues 363-390 form a helical membrane-spanning segment; that stretch reads YAFLRVLIWLINILAIFGNLTVLFVLLT. Topologically, residues 391 to 399 are cytoplasmic; that stretch reads SRYKLTVPR. The helical transmembrane segment at 400 to 422 threads the bilayer; it reads FLMCNLSFADFCMGLYLLLIASV. The Extracellular portion of the chain corresponds to 423–443; it reads DSQTKGQYYNHAIDWQTGSGC. A disulfide bridge connects residues Cys443 and Cys518. The helical transmembrane segment at 444-466 threads the bilayer; that stretch reads SAAGFFTVFASELSVYTLTVITL. The Cytoplasmic portion of the chain corresponds to 467-486; the sequence is ERWHTITYAVQLDQKLRLRH. Residues 487 to 509 traverse the membrane as a helical segment; sequence AIPIMLGGWIFSTLMATLPLVGV. The Extracellular segment spans residues 510–529; it reads SSYMKVSICLPMDVESTLSQ. A helical membrane pass occupies residues 530–551; it reads VYILSILLLNAVAFVVICACYV. Over 552-574 the chain is Cytoplasmic; the sequence is RIYFAVQNPELTAPNKDTKIAKK. Residues 575 to 598 traverse the membrane as a helical segment; sequence MAILIFTDFTCMAPISFFAISAAF. Residues 599-609 lie on the Extracellular side of the membrane; sequence KVPLITVTNSK. The helical transmembrane segment at 610–631 threads the bilayer; it reads VLLVLFYPVNSCANPFLYAVFT. Over 632–700 the chain is Cytoplasmic; that stretch reads KAFQRDFFLL…QPTPPRVLIQ (69 aa). 2 S-palmitoyl cysteine lipidation sites follow: Cys647 and Cys648.

This sequence belongs to the G-protein coupled receptor 1 family. FSH/LSH/TSH subfamily. Sulfated.

It localises to the cell membrane. In terms of biological role, receptor for lutropin-choriogonadotropic hormone. The activity of this receptor is mediated by G proteins which activate adenylate cyclase. This chain is Lutropin-choriogonadotropic hormone receptor (Lhcgr), found in Mus musculus (Mouse).